Here is a 774-residue protein sequence, read N- to C-terminus: Acetyl-CoA decarbonylase/synthase complex subunit alpha (774 aa).

[4Fe-4S] cluster is bound by residues cysteine 73, cysteine 76, cysteine 77, cysteine 79, cysteine 84, and cysteine 94. Histidine 117 serves as a coordination point for CO. [Ni-4Fe-4S] cluster contacts are provided by histidine 251, cysteine 279, and cysteine 318. 4Fe-4S ferredoxin-type domains are found at residues leucine 398–alanine 427 and phenylalanine 436–threonine 466. The [4Fe-4S] cluster site is built by cysteine 408, cysteine 411, cysteine 414, cysteine 418, cysteine 446, cysteine 449, cysteine 452, and cysteine 456. Positions 514, 543, and 578 each coordinate [Ni-4Fe-4S] cluster.

This sequence belongs to the Ni-containing carbon monoxide dehydrogenase family. Heterotetramer of two alpha and two epsilon subunits. The ACDS complex is made up of alpha, epsilon, beta, gamma and delta subunits with a probable stoichiometry of (alpha(2)epsilon(2))(4)-beta(8)-(gamma(1)delta(1))(8). The cofactor is [4Fe-4S] cluster. [Ni-4Fe-4S] cluster is required as a cofactor.

The catalysed reaction is CO + 2 oxidized [2Fe-2S]-[ferredoxin] + H2O = 2 reduced [2Fe-2S]-[ferredoxin] + CO2 + 2 H(+). In terms of biological role, part of the ACDS complex that catalyzes the reversible cleavage of acetyl-CoA, allowing autotrophic growth from CO(2). The alpha-epsilon subcomponent functions as a carbon monoxide dehydrogenase. This is Acetyl-CoA decarbonylase/synthase complex subunit alpha from Methanocaldococcus jannaschii (strain ATCC 43067 / DSM 2661 / JAL-1 / JCM 10045 / NBRC 100440) (Methanococcus jannaschii).